Consider the following 707-residue polypeptide: Elongation factor G (707 aa).

Residues 8-296 (ERYRNFGIMA…AVVDFLPAPT (289 aa)) form the tr-type G domain. GTP is bound by residues 17 to 24 (AHIDAGKT), 94 to 98 (DTPGH), and 148 to 151 (NKMD).

This sequence belongs to the TRAFAC class translation factor GTPase superfamily. Classic translation factor GTPase family. EF-G/EF-2 subfamily.

It is found in the cytoplasm. Catalyzes the GTP-dependent ribosomal translocation step during translation elongation. During this step, the ribosome changes from the pre-translocational (PRE) to the post-translocational (POST) state as the newly formed A-site-bound peptidyl-tRNA and P-site-bound deacylated tRNA move to the P and E sites, respectively. Catalyzes the coordinated movement of the two tRNA molecules, the mRNA and conformational changes in the ribosome. The protein is Elongation factor G of Paracoccus denitrificans (strain Pd 1222).